A 204-amino-acid polypeptide reads, in one-letter code: MKKIAIVGALLTSFVASSVWADAASDLKSRLDKVSSFHASFTQKVTDGSGNAVQEGQGDLWVKRPNLFNWHMTQPDESILVSDGKTLWFYNPFVEQATATLLKDATSNTPFMLIARNQTSDWQQYNIKQNGDDFVLTPKTSNGNLKQFTINVSNNGTINQFSAVEQDEQRSSYQLKSQQNGAIDASKFTFTPPQGVTVDDQRNK.

The first 21 residues, 1–21 (MKKIAIVGALLTSFVASSVWA), serve as a signal peptide directing secretion. The interval 169-204 (QRSSYQLKSQQNGAIDASKFTFTPPQGVTVDDQRNK) is disordered. A compositionally biased stretch (polar residues) spans 171–181 (SSYQLKSQQNG).

The protein belongs to the LolA family. Monomer.

The protein resides in the periplasm. Participates in the translocation of lipoproteins from the inner membrane to the outer membrane. Only forms a complex with a lipoprotein if the residue after the N-terminal Cys is not an aspartate (The Asp acts as a targeting signal to indicate that the lipoprotein should stay in the inner membrane). This is Outer-membrane lipoprotein carrier protein from Enterobacter sp. (strain 638).